The sequence spans 393 residues: Ceramide synthase 4 (393 aa).

The Lumenal portion of the chain corresponds to 1–31 (MSFSLSEWLWQETYWLPPNVTWAELEDRDGL). N19 carries N-linked (GlcNAc...) asparagine glycosylation. A helical transmembrane segment spans residues 32–52 (VFAHPHHVLAAFPVALVLVAV). Residues 67-128 (WMGVQDPIRR…RRRRNQDRPS (62 aa)) are homeobox-like. Residues 131–332 (KKFCEACWRF…ILRMLYSFLH (202 aa)) form the TLC domain. 4 consecutive transmembrane segments (helical) span residues 140–160 (FVFY…ESWL), 179–199 (LYWW…TLPF), 217–237 (VGLI…VVLL), and 265–285 (FIMF…TQVI). A Last loop motif motif is present at residues 291–301 (DSIKNSGPFFG). The chain crosses the membrane as a helical span at residues 304–324 (FFIVLLVMLQILHVYWFCLIL). Topologically, residues 325–393 (RMLYSFLHKG…CLTNGHTRAT (69 aa)) are cytoplasmic. Residues 341–393 (RSDVEEPDSSDDEPVSEGPQLKNGMARGSRVAVTNGPRSRAAACLTNGHTRAT) form a disordered region. Phosphoserine is present on residues S342, S349, and S350. The span at 345-355 (EEPDSSDDEPV) shows a compositional bias: acidic residues.

In terms of processing, phosphorylated at the C-terminus by CK2. As to expression, ubiquitously expressed, with highest levels in skin.

It is found in the endoplasmic reticulum membrane. The enzyme catalyses sphinganine + octadecanoyl-CoA = N-(octadecanoyl)-sphinganine + CoA + H(+). It catalyses the reaction eicosanoyl-CoA + sphinganine = N-eicosanoylsphinganine + CoA + H(+). It carries out the reaction docosanoyl-CoA + sphinganine = N-docosanoylsphinganine + CoA + H(+). The catalysed reaction is tetracosanoyl-CoA + sphinganine = N-tetracosanoylsphinganine + CoA + H(+). The enzyme catalyses hexacosanoyl-CoA + sphinganine = N-hexacosanoylsphinganine + CoA + H(+). It catalyses the reaction a fatty acyl-CoA + sphing-4-enine = an N-acylsphing-4-enine + CoA + H(+). It carries out the reaction sphing-4-enine + octadecanoyl-CoA = N-octadecanoylsphing-4-enine + CoA + H(+). The catalysed reaction is hexadecasphinganine + octadecanoyl-CoA = N-octadecanoylhexadecasphinganine + CoA + H(+). It functions in the pathway lipid metabolism; sphingolipid metabolism. Ceramide synthase that catalyzes formation of ceramide from sphinganine and acyl-CoA substrates, with high selectivity toward long and very-long chains (C18:0-C22:0) as acyl donor. This Mus musculus (Mouse) protein is Ceramide synthase 4.